Here is a 283-residue protein sequence, read N- to C-terminus: Pantothenate synthetase (283 aa).

An ATP-binding site is contributed by 31–38 (MGALHDGH). His38 acts as the Proton donor in catalysis. Gln62 lines the (R)-pantoate pocket. Gln62 contacts beta-alanine. 148–151 (GKKD) is an ATP binding site. Gln154 is a binding site for (R)-pantoate. Residues Val177 and 185–188 (KSSR) contribute to the ATP site.

The protein belongs to the pantothenate synthetase family. As to quaternary structure, homodimer.

The protein resides in the cytoplasm. The enzyme catalyses (R)-pantoate + beta-alanine + ATP = (R)-pantothenate + AMP + diphosphate + H(+). The protein operates within cofactor biosynthesis; (R)-pantothenate biosynthesis; (R)-pantothenate from (R)-pantoate and beta-alanine: step 1/1. Its function is as follows. Catalyzes the condensation of pantoate with beta-alanine in an ATP-dependent reaction via a pantoyl-adenylate intermediate. The protein is Pantothenate synthetase of Staphylococcus aureus (strain Mu3 / ATCC 700698).